We begin with the raw amino-acid sequence, 232 residues long: Large ribosomal subunit protein uL1 (232 aa).

The protein belongs to the universal ribosomal protein uL1 family. Part of the 50S ribosomal subunit.

Its function is as follows. Binds directly to 23S rRNA. The L1 stalk is quite mobile in the ribosome, and is involved in E site tRNA release. Functionally, protein L1 is also a translational repressor protein, it controls the translation of the L11 operon by binding to its mRNA. The polypeptide is Large ribosomal subunit protein uL1 (Bordetella bronchiseptica (strain ATCC BAA-588 / NCTC 13252 / RB50) (Alcaligenes bronchisepticus)).